The chain runs to 271 residues: 3-methyl-2-oxobutanoate hydroxymethyltransferase (271 aa).

Mg(2+)-binding residues include D53 and D92. 3-methyl-2-oxobutanoate contacts are provided by residues 53 to 54, D92, and K120; that span reads DS. E122 contributes to the Mg(2+) binding site. E189 functions as the Proton acceptor in the catalytic mechanism.

The protein belongs to the PanB family. As to quaternary structure, homodecamer; pentamer of dimers. Requires Mg(2+) as cofactor.

It localises to the cytoplasm. It catalyses the reaction 3-methyl-2-oxobutanoate + (6R)-5,10-methylene-5,6,7,8-tetrahydrofolate + H2O = 2-dehydropantoate + (6S)-5,6,7,8-tetrahydrofolate. Its pathway is cofactor biosynthesis; (R)-pantothenate biosynthesis; (R)-pantoate from 3-methyl-2-oxobutanoate: step 1/2. In terms of biological role, catalyzes the reversible reaction in which hydroxymethyl group from 5,10-methylenetetrahydrofolate is transferred onto alpha-ketoisovalerate to form ketopantoate. This Burkholderia thailandensis (strain ATCC 700388 / DSM 13276 / CCUG 48851 / CIP 106301 / E264) protein is 3-methyl-2-oxobutanoate hydroxymethyltransferase.